A 500-amino-acid chain; its full sequence is Cytochrome P450 2D4 (500 aa).

C446 provides a ligand contact to heme.

Belongs to the cytochrome P450 family. Heme serves as cofactor. Brain.

It is found in the endoplasmic reticulum membrane. The protein localises to the microsome membrane. The enzyme catalyses an organic molecule + reduced [NADPH--hemoprotein reductase] + O2 = an alcohol + oxidized [NADPH--hemoprotein reductase] + H2O + H(+). In terms of biological role, cytochromes P450 are a group of heme-thiolate monooxygenases. In liver microsomes, this enzyme is involved in an NADPH-dependent electron transport pathway. It oxidizes a variety of structurally unrelated compounds, including steroids, fatty acids, and xenobiotics. The protein is Cytochrome P450 2D4 (Cyp2d4) of Rattus norvegicus (Rat).